Consider the following 485-residue polypeptide: E3 ubiquitin-protein ligase RNF8 (485 aa).

One can recognise an FHA domain in the interval 38–92; that stretch reads VTVGRGFGVTYQLVSKICPLMISRNHCVLKQNPEGQWTIMDNKSLNGVWLNRARL. Residues 68–72 are required for interaction with PIWIL1; that stretch reads QNPEG. S157 is modified (phosphoserine). The interval 181–220 is disordered; the sequence is CESGQPVKSQGKGEVASTPSDNLDPKLTALEPSKTTGAPI. An RING-type zinc finger spans residues 403-441; it reads CIICSEYFIEAVTLNCAHSFCSYCINEWMKRKIECPICR.

It belongs to the RNF8 family. Homodimer. Forms a E2-E3 ubiquitin ligase complex composed of the RNF8 homodimer and a E2 heterodimer of UBE2N and UBE2V2. Interacts with class III E2s, including UBE2E1, UBE2E2, and UBE2E3 and with UBE2N. Interacts with RXRA. Interacts (via FHA domain) with ATM-phosphorylated MDC1. Interacts (via FHA domain) with 'Thr-4827' phosphorylated HERC2 (via C-terminus). Interacts with PIWIL1; leading to sequester RNF8 in the cytoplasm. Interacts with WRAP53/TCAB1. As to quaternary structure, (Microbial infection) Interacts (via FHA domain) with phosphorylated human herpesvirus 1 ICP0 protein; leading to RNF8 degradation by the proteasome. Post-translationally, autoubiquitinated through 'Lys-48' and 'Lys-63' of ubiquitin. 'Lys-63' polyubiquitination is mediated by UBE2N. 'Lys-29'-type polyubiquitination is also observed, but it doesn't require its own functional RING-type zinc finger. As to expression, ubiquitous. In fetal tissues, highest expression in brain, thymus and liver. In adult tissues, highest levels in brain and testis, lowest levels in peripheral blood cells.

The protein resides in the nucleus. Its subcellular location is the cytoplasm. It localises to the midbody. It is found in the chromosome. The protein localises to the telomere. The catalysed reaction is S-ubiquitinyl-[E2 ubiquitin-conjugating enzyme]-L-cysteine + [acceptor protein]-L-lysine = [E2 ubiquitin-conjugating enzyme]-L-cysteine + N(6)-ubiquitinyl-[acceptor protein]-L-lysine.. Its pathway is protein modification; protein ubiquitination. E3 ubiquitin-protein ligase that plays a key role in DNA damage signaling via 2 distinct roles: by mediating the 'Lys-63'-linked ubiquitination of histones H2A and H2AX and promoting the recruitment of DNA repair proteins at double-strand breaks (DSBs) sites, and by catalyzing 'Lys-48'-linked ubiquitination to remove target proteins from DNA damage sites. Following DNA DSBs, it is recruited to the sites of damage by ATM-phosphorylated MDC1 and catalyzes the 'Lys-63'-linked ubiquitination of histones H2A and H2AX, thereby promoting the formation of TP53BP1 and BRCA1 ionizing radiation-induced foci (IRIF). Also controls the recruitment of UIMC1-BRCC3 (RAP80-BRCC36) and PAXIP1/PTIP to DNA damage sites. Promotes the recruitment of NBN to DNA damage sites by catalyzing 'Lys-6'-linked ubiquitination of NBN. Also recruited at DNA interstrand cross-links (ICLs) sites and catalyzes 'Lys-63'-linked ubiquitination of histones H2A and H2AX, leading to recruitment of FAAP20/C1orf86 and Fanconi anemia (FA) complex, followed by interstrand cross-link repair. H2A ubiquitination also mediates the ATM-dependent transcriptional silencing at regions flanking DSBs in cis, a mechanism to avoid collision between transcription and repair intermediates. Promotes the formation of 'Lys-63'-linked polyubiquitin chains via interactions with the specific ubiquitin-conjugating UBE2N/UBC13 and ubiquitinates non-histone substrates such as PCNA. Substrates that are polyubiquitinated at 'Lys-63' are usually not targeted for degradation. Also catalyzes the formation of 'Lys-48'-linked polyubiquitin chains via interaction with the ubiquitin-conjugating UBE2L6/UBCH8, leading to degradation of substrate proteins such as CHEK2, JMJD2A/KDM4A and KU80/XRCC5: it is still unclear how the preference toward 'Lys-48'- versus 'Lys-63'-linked ubiquitination is regulated but it could be due to RNF8 ability to interact with specific E2 specific ligases. For instance, interaction with phosphorylated HERC2 promotes the association between RNF8 and UBE2N/UBC13 and favors the specific formation of 'Lys-63'-linked ubiquitin chains. Promotes non-homologous end joining (NHEJ) by promoting the 'Lys-48'-linked ubiquitination and degradation the of KU80/XRCC5. Following DNA damage, mediates the ubiquitination and degradation of JMJD2A/KDM4A in collaboration with RNF168, leading to unmask H4K20me2 mark and promote the recruitment of TP53BP1 at DNA damage sites. Following DNA damage, mediates the ubiquitination and degradation of POLD4/p12, a subunit of DNA polymerase delta. In the absence of POLD4, DNA polymerase delta complex exhibits higher proofreading activity. In addition to its function in damage signaling, also plays a role in higher-order chromatin structure by mediating extensive chromatin decondensation. Involved in the activation of ATM by promoting histone H2B ubiquitination, which indirectly triggers histone H4 'Lys-16' acetylation (H4K16ac), establishing a chromatin environment that promotes efficient activation of ATM kinase. Required in the testis, where it plays a role in the replacement of histones during spermatogenesis. At uncapped telomeres, promotes the joining of deprotected chromosome ends by inducing H2A ubiquitination and TP53BP1 recruitment, suggesting that it may enhance cancer development by aggravating telomere-induced genome instability in case of telomeric crisis. Promotes the assembly of RAD51 at DNA DSBs in the absence of BRCA1 and TP53BP1 Also involved in class switch recombination in immune system, via its role in regulation of DSBs repair. May be required for proper exit from mitosis after spindle checkpoint activation and may regulate cytokinesis. May play a role in the regulation of RXRA-mediated transcriptional activity. Not involved in RXRA ubiquitination by UBE2E2. This Homo sapiens (Human) protein is E3 ubiquitin-protein ligase RNF8.